The primary structure comprises 420 residues: Adenylosuccinate synthetase (420 aa).

GTP contacts are provided by residues 11 to 17 (GDEGKGK) and 39 to 41 (GHT). D12 (proton acceptor) is an active-site residue. The Mg(2+) site is built by D12 and G39. Residues 12–15 (DEGK), 37–40 (NAGH), T129, R143, N218, T233, and R297 contribute to the IMP site. H40 (proton donor) is an active-site residue. A substrate-binding site is contributed by 293 to 299 (VTTGRKR). GTP is bound by residues R299, 325-327 (KLD), and 407-409 (GTG).

It belongs to the adenylosuccinate synthetase family. As to quaternary structure, homodimer. Mg(2+) is required as a cofactor.

The protein resides in the cytoplasm. It catalyses the reaction IMP + L-aspartate + GTP = N(6)-(1,2-dicarboxyethyl)-AMP + GDP + phosphate + 2 H(+). It participates in purine metabolism; AMP biosynthesis via de novo pathway; AMP from IMP: step 1/2. Plays an important role in the de novo pathway and in the salvage pathway of purine nucleotide biosynthesis. Catalyzes the first committed step in the biosynthesis of AMP from IMP. The polypeptide is Adenylosuccinate synthetase (Uncinocarpus reesii (strain UAMH 1704)).